Here is a 419-residue protein sequence, read N- to C-terminus: L-rhamnose isomerase (419 aa).

Residues histidine 262, aspartate 294, and aspartate 296 each contribute to the Mn(2+) site.

The protein belongs to the rhamnose isomerase family. In terms of assembly, homotetramer. It depends on Mn(2+) as a cofactor.

It localises to the cytoplasm. The catalysed reaction is L-rhamnopyranose = L-rhamnulose. It participates in carbohydrate degradation; L-rhamnose degradation; glycerone phosphate from L-rhamnose: step 1/3. Its function is as follows. Catalyzes the interconversion of L-rhamnose and L-rhamnulose. In Klebsiella pneumoniae (strain 342), this protein is L-rhamnose isomerase.